We begin with the raw amino-acid sequence, 490 residues long: Monocarboxylate transporter 3 (490 aa).

Residues 1-14 (MGAGGPRRGAGPPD) lie on the Cytoplasmic side of the membrane. Residues 15–35 (GGWGWVVLGACFVITGFAYGF) traverse the membrane as a helical segment. The Extracellular segment spans residues 36–58 (PKAVSVFFRELKRDFGAGYSDTA). A helical transmembrane segment spans residues 59 to 79 (WVSSIMLAMLYGTGPLSSILV). Over 80–85 (TRFGCR) the chain is Cytoplasmic. A helical transmembrane segment spans residues 86–106 (PVMLAGGLLASAGMILASFAS). At 107-115 (RLLELYLTA) the chain is on the extracellular side. Residues 116–136 (GVLTGLGLALNFQPSLIMLGL) form a helical membrane-spanning segment. Topologically, residues 137 to 147 (YFERRRPLANG) are cytoplasmic. Residues 148-168 (LAAAGSPVFLSTLSPLGQLLG) traverse the membrane as a helical segment. At 169-172 (ERFG) the chain is on the extracellular side. Residues 173–193 (WRGGFLLFGGLLLHCCACGAV) traverse the membrane as a helical segment. Residues 194-230 (MRPPPGPQPRPDPAPPGGRARHRQLLDLAVCTDRTFM) are Cytoplasmic-facing. The chain crosses the membrane as a helical span at residues 231-251 (VYMVTKFLMALGLFVPAILLV). The Extracellular portion of the chain corresponds to 252–257 (NYAKDA). The helical transmembrane segment at 258-278 (GVPDAEAAFLLSIVGFVDIVA) threads the bilayer. Topologically, residues 279–293 (RPACGALAGLGRLRP) are cytoplasmic. Residues 294 to 314 (HVPYLFSLALLANGLTDLISA) traverse the membrane as a helical segment. The Extracellular segment spans residues 315–318 (RARS). A helical transmembrane segment spans residues 319–339 (YGTLVAFCIAFGLSYGMVGAL). Over 340–352 (QFEVLMATVGAPR) the chain is Cytoplasmic. Residues 353 to 373 (FPSALGLVLLVEAVAVLIGPP) traverse the membrane as a helical segment. The Extracellular portion of the chain corresponds to 374-386 (SAGRLVDALKNYE). The chain crosses the membrane as a helical span at residues 387-407 (IIFYLAGSEVVLAGVFMAVTT). Residues 408 to 490 (YCCQRCSKDI…GGHEAHGQNA (83 aa)) are Cytoplasmic-facing. A disordered region spans residues 419–490 (PGPSAEGGTS…GGHEAHGQNA (72 aa)). 2 basolateral sorting signal regions span residues 426–460 (GTSD…VLSP) and 461–480 (RAGS…HESV). Basic and acidic residues predominate over residues 475-490 (LSHESVGGHEAHGQNA).

Belongs to the major facilitator superfamily. Monocarboxylate porter (TC 2.A.1.13) family. Retinal pigment epithelium.

It is found in the basolateral cell membrane. The enzyme catalyses (S)-lactate(in) + H(+)(in) = (S)-lactate(out) + H(+)(out). In terms of biological role, probable retinal pigment epithelium (RPE)-specific proton-coupled L-lactate transporter. May facilitate transport of lactate and H(+) out of the retina and could therefore play a role in pH and ion homeostasis of the outer retina. The polypeptide is Monocarboxylate transporter 3 (Slc16a8) (Rattus norvegicus (Rat)).